The following is a 614-amino-acid chain: MTDVSAPVFDGKAFAAQLSTAPGVYRMYAADDTLLYVGKARALRNRVGSYFNGSPKNARIMSMISQITRMDVTVTRSEAEALLLENQLIKSLSPRYNVSLRDDKTYPHVLLTREDWPRIALHRGPRAIPGRYFGPYPGVTAVRETLNLMHKLFKLRSCEDSVFRNRSRPCLQYQIGRCSAPCVELVPAPEYAESVRRAALFLEGKSDELTRELGEQMQAASEALEFEQAARLRDLISSLRSMQTRQYVDGRAADLDVLAVAMQGSQACVLLLAFRDGRNLGTRPFFPRTNGEESPEEVLAAFVSQYYIEFEPPREILLDREIPDADLLVAALSASAERKVQLKWNVRGERAGYVELASRNAQLTLATELNSRNAQHARSDALRDMLGLAEPVKRVECFDISHTLGEATVASCVVFDAAGPVRAQYRRFNISGIEPGDDYAAMRQAIDRRFRRAVEEQGVLPDVLLIDGGAGQLAQAQAALADLGVEGVLLVGVAKGVERRAGHEALVMPDGRELRPGAANPALQFIQQVRDEAHRFAITGHRGRRQKARMTSKLEDIPGIGPRRRASLLKHFGGLVGLKAAGEAEIAKVEGINDALAARIYANLHGLATPDAAE.

A GIY-YIG domain is found at 20 to 98 (TAPGVYRMYA…IKSLSPRYNV (79 aa)). The UVR domain maps to 207 to 242 (DELTRELGEQMQAASEALEFEQAARLRDLISSLRSM).

It belongs to the UvrC family. In terms of assembly, interacts with UvrB in an incision complex.

It is found in the cytoplasm. In terms of biological role, the UvrABC repair system catalyzes the recognition and processing of DNA lesions. UvrC both incises the 5' and 3' sides of the lesion. The N-terminal half is responsible for the 3' incision and the C-terminal half is responsible for the 5' incision. The sequence is that of UvrABC system protein C from Stenotrophomonas maltophilia (strain R551-3).